Reading from the N-terminus, the 453-residue chain is Ankyrin repeat and SOCS box protein 16 (453 aa).

7 ANK repeats span residues 56–85 (CRDP…AANM), 110–139 (KQTA…ELDA), 142–171 (GGRA…KANV), 175–204 (EGMT…SVNV), 209–238 (SEVT…DVAL), 242–279 (QGET…DPQA), and 283–312 (KRHT…SPGV). An SOCS box domain is found at 397 to 453 (FYSSALSMENQPRQLQHLARLAVRAQLGSHCRQAAAQLPLPPLLRDYLLLGVEGRIQ).

This sequence belongs to the ankyrin SOCS box (ASB) family.

Its pathway is protein modification; protein ubiquitination. May be a substrate-recognition component of a SCF-like ECS (Elongin-Cullin-SOCS-box protein) E3 ubiquitin-protein ligase complex which mediates the ubiquitination and subsequent proteasomal degradation of target proteins. This is Ankyrin repeat and SOCS box protein 16 (Asb16) from Mus musculus (Mouse).